Here is a 231-residue protein sequence, read N- to C-terminus: Ribose-5-phosphate isomerase A (231 aa).

Substrate-binding positions include T31–T34, D86–D89, and K100–G103. E109 acts as the Proton acceptor in catalysis. K127 is a substrate binding site.

The protein belongs to the ribose 5-phosphate isomerase family. As to quaternary structure, homodimer.

It catalyses the reaction aldehydo-D-ribose 5-phosphate = D-ribulose 5-phosphate. It functions in the pathway carbohydrate degradation; pentose phosphate pathway; D-ribose 5-phosphate from D-ribulose 5-phosphate (non-oxidative stage): step 1/1. Catalyzes the reversible conversion of ribose-5-phosphate to ribulose 5-phosphate. The protein is Ribose-5-phosphate isomerase A of Gluconobacter oxydans (strain 621H) (Gluconobacter suboxydans).